The primary structure comprises 333 residues: MLFNIWFGSSLCYLFLLPFSWVYGFFSTLNRISYKYGWRKVYRFSVPIIVIGNLTIGGNGKTPMVLWLIDQLKTRGWRVGVVSRGYGGRSDKYPIIINSTSCSKKCGDEPLLIWRRTGVLVSVSPNRVKAVSALLKKQPLLDIIISDDGLQHYALFRDIEWVVVHSLRRFGNGCWLPAGPMRERITRLNTVQAIIINGLSNDIQSGAILMQLCPRSIINLVTGEIRPIQPLKDVVAIAGIGYPKQFFMTLQDYGIFPIKTIEFSDHHMYSEIMLSSLTSGNEMLLMTEKDAIKCLDFAHENWWYVHIDVNIHQEDTKKLLSKIESTIQYYKNN.

55-62 lines the ATP pocket; it reads TIGGNGKT.

It belongs to the LpxK family.

The catalysed reaction is a lipid A disaccharide + ATP = a lipid IVA + ADP + H(+). It participates in glycolipid biosynthesis; lipid IV(A) biosynthesis; lipid IV(A) from (3R)-3-hydroxytetradecanoyl-[acyl-carrier-protein] and UDP-N-acetyl-alpha-D-glucosamine: step 6/6. Functionally, transfers the gamma-phosphate of ATP to the 4'-position of a tetraacyldisaccharide 1-phosphate intermediate (termed DS-1-P) to form tetraacyldisaccharide 1,4'-bis-phosphate (lipid IVA). The sequence is that of Tetraacyldisaccharide 4'-kinase from Blochmanniella floridana.